Here is a 237-residue protein sequence, read N- to C-terminus: N-alpha-acetyltransferase 40 (237 aa).

A lipid anchor (N-myristoyl glycine) is attached at Gly-2. The N-acetyltransferase domain maps to 63–216 (TALSPDTVEW…EDCSYEILSR (154 aa)). Substrate contacts are provided by residues Tyr-85, 127 to 129 (DVE), and Tyr-138. Residues 140–142 (VQL) and 148–153 (RKGLGK) contribute to the acetyl-CoA site. Thr-174 contacts substrate. Acetyl-CoA is bound at residue Asn-179. Tyr-211 lines the substrate pocket.

This sequence belongs to the acetyltransferase family. NAA40 subfamily.

It localises to the cytoplasm. The protein resides in the nucleus. The catalysed reaction is N-terminal L-seryl-[histone H4] + acetyl-CoA = N-terminal N(alpha)-acetyl-L-seryl-[histone H4] + CoA + H(+). It carries out the reaction N-terminal L-seryl-[histone H2A] + acetyl-CoA = N-terminal N(alpha)-acetyl-L-seryl-[histone H2A] + CoA + H(+). N-alpha-acetyltransferase that specifically mediates the acetylation of the N-terminal residues of histones H4 and H2A. In contrast to other N-alpha-acetyltransferase, has a very specific selectivity for histones H4 and H2A N-terminus and specifically recognizes the 'Ser-Gly-Arg-Gly sequence'. The chain is N-alpha-acetyltransferase 40 (naa40) from Danio rerio (Zebrafish).